Reading from the N-terminus, the 124-residue chain is Small ribosomal subunit protein uS12 (124 aa).

D89 is modified (3-methylthioaspartic acid).

Belongs to the universal ribosomal protein uS12 family. Part of the 30S ribosomal subunit. Contacts proteins S8 and S17. May interact with IF1 in the 30S initiation complex.

Its function is as follows. With S4 and S5 plays an important role in translational accuracy. Interacts with and stabilizes bases of the 16S rRNA that are involved in tRNA selection in the A site and with the mRNA backbone. Located at the interface of the 30S and 50S subunits, it traverses the body of the 30S subunit contacting proteins on the other side and probably holding the rRNA structure together. The combined cluster of proteins S8, S12 and S17 appears to hold together the shoulder and platform of the 30S subunit. The chain is Small ribosomal subunit protein uS12 from Shewanella baltica (strain OS223).